A 309-amino-acid chain; its full sequence is Taste receptor type 2 member 31 (309 aa).

Topologically, residues 1–2 (MI) are extracellular. Residues 3–23 (TFLPIIFSILVVVTFVIGNFA) form a helical membrane-spanning segment. Over 24–55 (NGFIALVNSTEWVKRQKISFADQILTALAVSR) the chain is Cytoplasmic. The chain crosses the membrane as a helical span at residues 56 to 76 (VGLLWVLLLNWYATVLNPAFY). At 77–100 (SVEVRTTTYNVWAVTNHFSNWLAT) the chain is on the extracellular side. A helical transmembrane segment spans residues 101–121 (SLSIFYLLKIANFSNLIFLHL). The Cytoplasmic portion of the chain corresponds to 122–126 (KRRVK). Residues 127–147 (NVILVMLLGPLLILACHLFMV) traverse the membrane as a helical segment. Residues 148–181 (NMNEIVRTKEYEENMTWKYILRNAIYHPGMTVTT) are Extracellular-facing. Asn-161 is a glycosylation site (N-linked (GlcNAc...) asparagine). A helical membrane pass occupies residues 182–202 (LQNLVPFTLTLISFLLLICSL). Residues 203-229 (CKHLKKMQLHGKGPQDPSTKVHIKALQ) are Cytoplasmic-facing. Residues 230–250 (IVISFLLLCVIYFVSVIISIW) traverse the membrane as a helical segment. Residues 251–259 (SFESLGNKP) lie on the Extracellular side of the membrane. Residues 260–280 (VFMFCQAIRFSYPSAHPFIVI) traverse the membrane as a helical segment. Topologically, residues 281–309 (WGNKKLKQTFLSVLWNVRYWVKGQKPSSL) are cytoplasmic.

It belongs to the G-protein coupled receptor T2R family.

Its subcellular location is the membrane. Receptor that may play a role in the perception of bitterness and is gustducin-linked. May play a role in sensing the chemical composition of the gastrointestinal content. The activity of this receptor may stimulate alpha gustducin, mediate PLC-beta-2 activation and lead to the gating of TRPM5. This chain is Taste receptor type 2 member 31 (TAS2R31), found in Papio hamadryas (Hamadryas baboon).